The chain runs to 637 residues: 1-deoxy-D-xylulose-5-phosphate synthase (637 aa).

Thiamine diphosphate is bound by residues H76 and 117–119; that span reads GHS. Residue D148 participates in Mg(2+) binding. Thiamine diphosphate is bound by residues 149-150, N177, Y294, and E381; that span reads GA. Position 177 (N177) interacts with Mg(2+).

The protein belongs to the transketolase family. DXPS subfamily. In terms of assembly, homodimer. Mg(2+) is required as a cofactor. The cofactor is thiamine diphosphate.

It carries out the reaction D-glyceraldehyde 3-phosphate + pyruvate + H(+) = 1-deoxy-D-xylulose 5-phosphate + CO2. It participates in metabolic intermediate biosynthesis; 1-deoxy-D-xylulose 5-phosphate biosynthesis; 1-deoxy-D-xylulose 5-phosphate from D-glyceraldehyde 3-phosphate and pyruvate: step 1/1. In terms of biological role, catalyzes the acyloin condensation reaction between C atoms 2 and 3 of pyruvate and glyceraldehyde 3-phosphate to yield 1-deoxy-D-xylulose-5-phosphate (DXP). This chain is 1-deoxy-D-xylulose-5-phosphate synthase, found in Neisseria meningitidis serogroup B (strain ATCC BAA-335 / MC58).